The sequence spans 411 residues: Dual-specificity RNA methyltransferase RlmN (411 aa).

The Proton acceptor role is filled by glutamate 125. Positions 131-380 (EEGRGTLCIS…IRTPRGRDIL (250 aa)) constitute a Radical SAM core domain. Cysteine 138 and cysteine 383 form a disulfide bridge. The [4Fe-4S] cluster site is built by cysteine 145, cysteine 149, and cysteine 152. S-adenosyl-L-methionine-binding positions include 209–210 (GE), serine 241, 263–265 (SLH), and asparagine 340. The active-site S-methylcysteine intermediate is the cysteine 383.

This sequence belongs to the radical SAM superfamily. RlmN family. [4Fe-4S] cluster serves as cofactor.

It localises to the cytoplasm. It carries out the reaction adenosine(2503) in 23S rRNA + 2 reduced [2Fe-2S]-[ferredoxin] + 2 S-adenosyl-L-methionine = 2-methyladenosine(2503) in 23S rRNA + 5'-deoxyadenosine + L-methionine + 2 oxidized [2Fe-2S]-[ferredoxin] + S-adenosyl-L-homocysteine. It catalyses the reaction adenosine(37) in tRNA + 2 reduced [2Fe-2S]-[ferredoxin] + 2 S-adenosyl-L-methionine = 2-methyladenosine(37) in tRNA + 5'-deoxyadenosine + L-methionine + 2 oxidized [2Fe-2S]-[ferredoxin] + S-adenosyl-L-homocysteine. In terms of biological role, specifically methylates position 2 of adenine 2503 in 23S rRNA and position 2 of adenine 37 in tRNAs. m2A2503 modification seems to play a crucial role in the proofreading step occurring at the peptidyl transferase center and thus would serve to optimize ribosomal fidelity. The sequence is that of Dual-specificity RNA methyltransferase RlmN from Brucella suis biovar 1 (strain 1330).